The sequence spans 141 residues: Aspartate 1-decarboxylase (141 aa).

The active-site Schiff-base intermediate with substrate; via pyruvic acid is the serine 25. Pyruvic acid (Ser) is present on serine 25. Residue threonine 57 coordinates substrate. Residue tyrosine 58 is the Proton donor of the active site. 73-75 contributes to the substrate binding site; that stretch reads GAA.

The protein belongs to the PanD family. As to quaternary structure, heterooctamer of four alpha and four beta subunits. Pyruvate is required as a cofactor. Post-translationally, is synthesized initially as an inactive proenzyme, which is activated by self-cleavage at a specific serine bond to produce a beta-subunit with a hydroxyl group at its C-terminus and an alpha-subunit with a pyruvoyl group at its N-terminus.

It is found in the cytoplasm. The catalysed reaction is L-aspartate + H(+) = beta-alanine + CO2. It participates in cofactor biosynthesis; (R)-pantothenate biosynthesis; beta-alanine from L-aspartate: step 1/1. Functionally, catalyzes the pyruvoyl-dependent decarboxylation of aspartate to produce beta-alanine. The sequence is that of Aspartate 1-decarboxylase from Pseudarthrobacter chlorophenolicus (strain ATCC 700700 / DSM 12829 / CIP 107037 / JCM 12360 / KCTC 9906 / NCIMB 13794 / A6) (Arthrobacter chlorophenolicus).